A 548-amino-acid polypeptide reads, in one-letter code: MKKVTAMLFSMAVGLNAVSMAAKAKASEEQETDVLLIGGGIMSATLGTYLRELEPEWSMTMVERLEGVAQESSNGWNNAGTGHSALMELNYTPQNADGSISIEKAVAINEAFQISRQFWAHQVERGVLRTPRSFINTVPHMSFVWGEDNVNFLRARYAALQQSSLFRGMRYSEDHAQIKEWAPLVMEGRDPQQKVAATRTEIGTDVNYGEITRQLIASLQKKSNFSLQLSSEVRALKRNDDNTWTVTVADLKNGTAQNIRAKFVFIGAGGAALKLLQESGIPEAKDYAGFPVGGQFLVSENPDVVNHHLAKVYGKASVGAPPMSVPHIDTRVLDGKRVVLFGPFATFSTKFLKNGSLWDLMSSTTTSNVMPMMHVGLDNFDLVKYLVSQVMLSEEDRFEALKEYYPQAKKEDWRLWQAGQRVQIIKRDADKGGVLRLGTEVVSDQQGTIAALLGASPGASTAAPIMLNLLEKVFGDRVSSPQWQATLKAIVPSYGRKLNGDVAATERELQYTSEVLGLKYDKPQAVDSTPKPQLKPQLVQKEVADIAL.

The protein belongs to the MQO family. The cofactor is FAD.

The catalysed reaction is (S)-malate + a quinone = a quinol + oxaloacetate. The protein operates within carbohydrate metabolism; tricarboxylic acid cycle; oxaloacetate from (S)-malate (quinone route): step 1/1. In Escherichia coli O6:H1 (strain CFT073 / ATCC 700928 / UPEC), this protein is Probable malate:quinone oxidoreductase.